The sequence spans 379 residues: Cytochrome b (379 aa).

The next 4 membrane-spanning stretches (helical) occupy residues 33-53 (FGSL…FLAM), 77-98 (WLIR…FIHV), 113-133 (WNIG…GYVL), and 178-198 (FFAF…VHLL). H83 and H97 together coordinate heme b. Heme b is bound by residues H182 and H196. H201 contacts a ubiquinone. A run of 4 helical transmembrane segments spans residues 226-246 (IKDL…ALFF), 288-308 (LGGV…PLLN), 320-340 (ITQT…WIGG), and 347-367 (FTTI…ILMP).

This sequence belongs to the cytochrome b family. In terms of assembly, the cytochrome bc1 complex contains 11 subunits: 3 respiratory subunits (MT-CYB, CYC1 and UQCRFS1), 2 core proteins (UQCRC1 and UQCRC2) and 6 low-molecular weight proteins (UQCRH/QCR6, UQCRB/QCR7, UQCRQ/QCR8, UQCR10/QCR9, UQCR11/QCR10 and a cleavage product of UQCRFS1). This cytochrome bc1 complex then forms a dimer. Requires heme b as cofactor.

Its subcellular location is the mitochondrion inner membrane. In terms of biological role, component of the ubiquinol-cytochrome c reductase complex (complex III or cytochrome b-c1 complex) that is part of the mitochondrial respiratory chain. The b-c1 complex mediates electron transfer from ubiquinol to cytochrome c. Contributes to the generation of a proton gradient across the mitochondrial membrane that is then used for ATP synthesis. The chain is Cytochrome b (MT-CYB) from Akodon aerosus (Highland grass mouse).